Reading from the N-terminus, the 105-residue chain is Replication initiation control protein YabA (105 aa).

Zn(2+)-binding residues include H79, C81, C95, and C98.

Belongs to the YabA family. Homotetramer. Interacts with both DnaA and DnaN, acting as a bridge between these two proteins. Zn(2+) is required as a cofactor.

Its subcellular location is the cytoplasm. It is found in the nucleoid. In terms of biological role, involved in control of chromosome replication initiation. Inhibits the cooperative binding of DnaA to the oriC region, thus negatively regulating initiation of chromosome replication. Inhibits the ability of DnaA-ATP to form a helix on DNA; does not disassemble preformed DnaA-DNA helices. Decreases the residence time of DnaA on the chromosome at its binding sites (oriC, replication forks and promoter-binding sites). Tethers DnaA to the replication machinery via the DNA polymerase beta sliding clamp subunit (dnaN). Associates with oriC and other DnaA targets on the chromosome in a DnaA-dependent manner. The chain is Replication initiation control protein YabA from Streptococcus suis (strain 98HAH33).